The primary structure comprises 230 residues: Demethylmenaquinone methyltransferase (230 aa).

Residues T57, D77, 101–102, and S118 each bind S-adenosyl-L-methionine; that span reads DI.

It belongs to the class I-like SAM-binding methyltransferase superfamily. MenG/UbiE family.

The enzyme catalyses a 2-demethylmenaquinol + S-adenosyl-L-methionine = a menaquinol + S-adenosyl-L-homocysteine + H(+). It functions in the pathway quinol/quinone metabolism; menaquinone biosynthesis; menaquinol from 1,4-dihydroxy-2-naphthoate: step 2/2. Its function is as follows. Methyltransferase required for the conversion of demethylmenaquinol (DMKH2) to menaquinol (MKH2). This chain is Demethylmenaquinone methyltransferase, found in Chlamydia caviae (strain ATCC VR-813 / DSM 19441 / 03DC25 / GPIC) (Chlamydophila caviae).